A 213-amino-acid chain; its full sequence is Uracil phosphoribosyltransferase (213 aa).

5-phospho-alpha-D-ribose 1-diphosphate contacts are provided by residues Arg78, Arg103, and 131–139; that span reads DPMLATGGT. Residues Ile197 and 202–204 each bind uracil; that span reads GDA. Asp203 serves as a coordination point for 5-phospho-alpha-D-ribose 1-diphosphate.

The protein belongs to the UPRTase family. The cofactor is Mg(2+).

The enzyme catalyses UMP + diphosphate = 5-phospho-alpha-D-ribose 1-diphosphate + uracil. It functions in the pathway pyrimidine metabolism; UMP biosynthesis via salvage pathway; UMP from uracil: step 1/1. With respect to regulation, allosterically activated by GTP. Functionally, catalyzes the conversion of uracil and 5-phospho-alpha-D-ribose 1-diphosphate (PRPP) to UMP and diphosphate. This Bifidobacterium longum subsp. infantis (strain ATCC 15697 / DSM 20088 / JCM 1222 / NCTC 11817 / S12) protein is Uracil phosphoribosyltransferase.